The following is a 101-amino-acid chain: MFDQTTNTETHQLTVGKIETANGTIKPQLLRDAVKRAVTNFFAQMDGQEAEEVYEMVLSEVEAPLLDIIMQHTRGNQTRAANMLGINRGTLRKKLKKYGMN.

Positions glutamine 77–lysine 96 form a DNA-binding region, H-T-H motif.

This sequence belongs to the transcriptional regulatory Fis family. Homodimer.

Activates ribosomal RNA transcription. Plays a direct role in upstream activation of rRNA promoters. The chain is DNA-binding protein Fis from Shewanella sediminis (strain HAW-EB3).